The sequence spans 353 residues: RNA 3'-terminal phosphate cyclase (353 aa).

ATP-binding positions include Gln-100 and 289–292 (HMSD). Residue His-315 is the Tele-AMP-histidine intermediate of the active site.

Belongs to the RNA 3'-terminal cyclase family. Type 1 subfamily.

It is found in the cytoplasm. The catalysed reaction is a 3'-end 3'-phospho-ribonucleotide-RNA + ATP = a 3'-end 2',3'-cyclophospho-ribonucleotide-RNA + AMP + diphosphate. Catalyzes the conversion of 3'-phosphate to a 2',3'-cyclic phosphodiester at the end of RNA. The mechanism of action of the enzyme occurs in 3 steps: (A) adenylation of the enzyme by ATP; (B) transfer of adenylate to an RNA-N3'P to produce RNA-N3'PP5'A; (C) and attack of the adjacent 2'-hydroxyl on the 3'-phosphorus in the diester linkage to produce the cyclic end product. The biological role of this enzyme is unknown but it is likely to function in some aspects of cellular RNA processing. The chain is RNA 3'-terminal phosphate cyclase from Ignicoccus hospitalis (strain KIN4/I / DSM 18386 / JCM 14125).